We begin with the raw amino-acid sequence, 133 residues long: Ribonuclease P protein component (133 aa).

Belongs to the RnpA family. Consists of a catalytic RNA component (M1 or rnpB) and a protein subunit.

The enzyme catalyses Endonucleolytic cleavage of RNA, removing 5'-extranucleotides from tRNA precursor.. RNaseP catalyzes the removal of the 5'-leader sequence from pre-tRNA to produce the mature 5'-terminus. It can also cleave other RNA substrates such as 4.5S RNA. The protein component plays an auxiliary but essential role in vivo by binding to the 5'-leader sequence and broadening the substrate specificity of the ribozyme. This is Ribonuclease P protein component from Synechococcus sp. (strain JA-2-3B'a(2-13)) (Cyanobacteria bacterium Yellowstone B-Prime).